The primary structure comprises 274 residues: Thiamine kinase (274 aa).

This sequence belongs to the thiamine kinase family.

The enzyme catalyses thiamine + ATP = thiamine phosphate + ADP + H(+). The protein operates within cofactor biosynthesis; thiamine diphosphate biosynthesis; thiamine phosphate from thiamine: step 1/1. Catalyzes the ATP-dependent phosphorylation of thiamine to thiamine phosphate. Is involved in thiamine salvage. The protein is Thiamine kinase of Escherichia coli O9:H4 (strain HS).